A 45-amino-acid polypeptide reads, in one-letter code: uncharacterized protein (45 aa).

This is an uncharacterized protein from Saccharomyces cerevisiae (strain ATCC 204508 / S288c) (Baker's yeast).